The primary structure comprises 146 residues: MAALRLLLGIDYGTKQIGVAVGQAITGQARELCTLKAQNGVPDWDKVQALINEWKPDAIVVGLPLNMDGTPSEMSARAEKFSRKLNGRFGVTVYTHDERLTTFEAKGERMARGGQKGSYRDNPVDAIAAALLLQGWLDEHPELLNV.

This sequence belongs to the YqgF nuclease family.

It localises to the cytoplasm. Functionally, could be a nuclease involved in processing of the 5'-end of pre-16S rRNA. The chain is Putative pre-16S rRNA nuclease from Pseudomonas syringae pv. tomato (strain ATCC BAA-871 / DC3000).